We begin with the raw amino-acid sequence, 370 residues long: Chorismate synthase (370 aa).

R48 provides a ligand contact to NADP(+). FMN contacts are provided by residues 125 to 127 (RSS), 241 to 242 (NA), G285, 300 to 304 (KPTSS), and R326.

The protein belongs to the chorismate synthase family. Homotetramer. It depends on FMNH2 as a cofactor.

It carries out the reaction 5-O-(1-carboxyvinyl)-3-phosphoshikimate = chorismate + phosphate. Its pathway is metabolic intermediate biosynthesis; chorismate biosynthesis; chorismate from D-erythrose 4-phosphate and phosphoenolpyruvate: step 7/7. Its function is as follows. Catalyzes the anti-1,4-elimination of the C-3 phosphate and the C-6 proR hydrogen from 5-enolpyruvylshikimate-3-phosphate (EPSP) to yield chorismate, which is the branch point compound that serves as the starting substrate for the three terminal pathways of aromatic amino acid biosynthesis. This reaction introduces a second double bond into the aromatic ring system. This Jannaschia sp. (strain CCS1) protein is Chorismate synthase.